A 1500-amino-acid polypeptide reads, in one-letter code: Carbamoyl-phosphate synthase [ammonia], mitochondrial (1500 aa).

The N-terminal 38 residues, 1 to 38, are a transit peptide targeting the mitochondrion; the sequence is MTRILTAFKVVRTLKTGFGFTNVTAHQKWKFSRPGIRL. The interval 39 to 218 is anthranilate phosphoribosyltransferase homolog; sequence LSVKAQTAHI…VKVYGKGNPT (180 aa). N6-acetyllysine; alternate is present on residues Lys-55, Lys-57, and Lys-119. The residue at position 55 (Lys-55) is an N6-glutaryllysine; alternate. 3 positions are modified to N6-succinyllysine; alternate: Lys-55, Lys-57, and Lys-119. Ser-148 is modified (phosphoserine). Residues Lys-157 and Lys-171 each carry the N6-acetyllysine; alternate modification. The residue at position 157 (Lys-157) is an N6-succinyllysine; alternate. At Lys-171 the chain carries N6-glutaryllysine; alternate. Lys-176 carries the N6-glutaryllysine modification. Lys-182 and Lys-197 each carry N6-acetyllysine. N6-acetyllysine; alternate is present on residues Lys-207, Lys-210, Lys-214, Lys-219, and Lys-228. Lys-207, Lys-210, Lys-214, Lys-219, and Lys-228 each carry N6-glutaryllysine; alternate. The residue at position 207 (Lys-207) is an N6-succinyllysine; alternate. Lys-214 carries the post-translational modification N6-succinyllysine; alternate. In terms of domain architecture, Glutamine amidotransferase type-1 spans 219–404; that stretch reads KVVAVDCGIK…FSLIKKGKAT (186 aa). The residue at position 237 (Lys-237) is an N6-glutaryllysine. N6-acetyllysine; alternate occurs at positions 280, 287, 307, and 310. Lys-280 is subject to N6-glutaryllysine; alternate. N6-succinyllysine; alternate is present on residues Lys-287 and Lys-307. 2 positions are modified to N6-glutaryllysine; alternate: Lys-307 and Lys-310. Lys-400 bears the N6-succinyllysine mark. An N6-glutaryllysine; alternate mark is found at Lys-402, Lys-412, Lys-453, and Lys-458. Lys-402 and Lys-412 each carry N6-succinyllysine; alternate. N6-acetyllysine; alternate is present on residues Lys-412, Lys-453, Lys-458, Lys-522, Lys-527, and Lys-532. N6-succinyllysine; alternate occurs at positions 458, 522, and 527. N6-glutaryllysine; alternate is present on residues Lys-527 and Lys-532. Ser-537 carries the post-translational modification Phosphoserine; alternate. Ser-537 carries O-linked (GlcNAc) serine; alternate glycosylation. Ser-540 carries the phosphoserine modification. Residues 551 to 743 form the ATP-grasp 1 domain; the sequence is SDKLNEINEK…LAFIAAKIAL (193 aa). Residues Lys-553 and Lys-560 each carry the N6-acetyllysine; alternate modification. The residue at position 553 (Lys-553) is an N6-glutaryllysine; alternate. N6-succinyllysine; alternate is present on residues Lys-553 and Lys-560. Ser-569 carries the post-translational modification Phosphoserine. 2 positions are modified to N6-acetyllysine; alternate: Lys-575 and Lys-612. N6-succinyllysine; alternate occurs at positions 575 and 612. Lys-630 is modified (N6-acetyllysine). Lys-728 is modified (N6-glutaryllysine). Residues Lys-751, Lys-757, Lys-772, Lys-793, Lys-811, and Lys-831 each carry the N6-acetyllysine; alternate modification. N6-succinyllysine; alternate is present on residues Lys-751 and Lys-757. Residues Lys-757, Lys-772, Lys-793, and Lys-811 each carry the N6-glutaryllysine; alternate modification. An N6-succinyllysine; alternate modification is found at Lys-793. Lys-831 is subject to N6-succinyllysine; alternate. At Ser-835 the chain carries Phosphoserine. Lys-841 and Lys-856 each carry N6-acetyllysine; alternate. Residues Lys-841 and Lys-856 each carry the N6-glutaryllysine; alternate modification. N6-glutaryllysine is present on Lys-869. Residues Lys-875, Lys-889, and Lys-892 each carry the N6-acetyllysine; alternate modification. Residues Lys-875, Lys-889, and Lys-892 each carry the N6-glutaryllysine; alternate modification. N6-succinyllysine; alternate is present on residues Lys-875, Lys-889, and Lys-892. Phosphoserine occurs at positions 896 and 898. An N6-glutaryllysine modification is found at Lys-905. N6-acetyllysine; alternate is present on residues Lys-908, Lys-915, and Lys-919. N6-glutaryllysine; alternate is present on residues Lys-908, Lys-915, and Lys-919. Lys-915 and Lys-919 each carry N6-succinyllysine; alternate. Lys-935 is modified (N6-acetyllysine). Ser-1036 carries the post-translational modification Phosphoserine. The residue at position 1074 (Lys-1074) is an N6-acetyllysine; alternate. At Lys-1074 the chain carries N6-glutaryllysine; alternate. Lys-1074 carries the N6-succinyllysine; alternate modification. 3 positions are modified to phosphoserine: Ser-1079, Ser-1090, and Ser-1093. The region spanning 1093–1284 is the ATP-grasp 2 domain; the sequence is SAVLDELKVA…FIDVATKVMI (192 aa). Residue Lys-1100 is modified to N6-acetyllysine; alternate. An N6-succinyllysine; alternate modification is found at Lys-1100. Lys-1149 bears the N6-succinyllysine mark. An N6-glutaryllysine modification is found at Lys-1150. Lys-1168 and Lys-1183 each carry N6-acetyllysine; alternate. Residues Lys-1168 and Lys-1183 each carry the N6-glutaryllysine; alternate modification. Lys-1168 and Lys-1183 each carry N6-succinyllysine; alternate. Phosphoserine is present on Ser-1203. Lys-1222 carries the post-translational modification N6-acetyllysine. Lys-1224 is subject to N6-glutaryllysine. Lys-1232, Lys-1269, and Lys-1291 each carry N6-acetyllysine; alternate. Residues Lys-1232, Lys-1269, and Lys-1291 each carry the N6-succinyllysine; alternate modification. O-linked (GlcNAc) serine glycosylation occurs at Ser-1331. Residue Thr-1332 is glycosylated (O-linked (GlcNAc) threonine). The MGS-like domain occupies 1355-1500; it reads FKIPQKGILI…YRQYSAGKAA (146 aa). The residue at position 1356 (Lys-1356) is an N6-acetyllysine; alternate. Lys-1356 and Lys-1360 each carry N6-glutaryllysine; alternate. Residues Lys-1356 and Lys-1360 each carry the N6-succinyllysine; alternate modification. N-acetyl-L-glutamate is bound by residues Thr-1391, Thr-1394, and Trp-1410. 2 positions are modified to phosphoserine: Ser-1419 and Ser-1431. Residues Asn-1437 and Asn-1440 each contribute to the N-acetyl-L-glutamate site. Residue Lys-1444 is modified to N6-acetyllysine; alternate. An N6-succinyllysine; alternate modification is found at Lys-1444. Asn-1449 is an N-acetyl-L-glutamate binding site. An N6-acetyllysine; alternate mark is found at Lys-1471, Lys-1479, and Lys-1486. Residues Lys-1471, Lys-1479, and Lys-1486 each carry the N6-succinyllysine; alternate modification. N6-glutaryllysine; alternate occurs at positions 1479 and 1486.

In terms of assembly, can form homooligomers (monomers as predominant form and dimers). Undergoes proteolytic cleavage in the C-terminal region corresponding to the loss of approximately 12 AA residues from the C-terminus. In terms of processing, succinylated at Lys-287 and Lys-1291. Desuccinylated at Lys-1291 by SIRT5, leading to activation. Post-translationally, glutarylated. Glutarylation levels increase during fasting. Deglutarylated by SIRT5 at Lys-55, Lys-219, Lys-412, Lys-889, Lys-892, Lys-915, Lys-1360 and Lys-1486, leading to activation. Primarily in the liver and small intestine.

The protein resides in the mitochondrion. Its subcellular location is the nucleus. It localises to the nucleolus. The protein localises to the cell membrane. It catalyses the reaction hydrogencarbonate + NH4(+) + 2 ATP = carbamoyl phosphate + 2 ADP + phosphate + 2 H(+). With respect to regulation, requires N-acetyl-L-glutamate (NAG) as an allosteric activator. Activated by glycerol in the absence of NAG, whereas in the presence of NAG it is inhibited by increasing concentrations of glycerol. Involved in the urea cycle of ureotelic animals where the enzyme plays an important role in removing excess ammonia from the cell. This Homo sapiens (Human) protein is Carbamoyl-phosphate synthase [ammonia], mitochondrial (CPS1).